A 24-amino-acid polypeptide reads, in one-letter code: Major pollen allergen Ole e 4 (24 aa).

The protein belongs to the glycosyl hydrolase 17 family. The N-terminus is blocked.

The sequence is that of Major pollen allergen Ole e 4 from Olea europaea (Common olive).